Here is a 131-residue protein sequence, read N- to C-terminus: Insertion element IS1 protein InsB (131 aa).

This sequence belongs to the transposase 27 family.

Its function is as follows. Absolutely required for transposition of IS1. In Shigella sonnei, this protein is Insertion element IS1 protein InsB (insB).